We begin with the raw amino-acid sequence, 521 residues long: Medium/long-chain-fatty-acid--[acyl-carrier-protein] ligase MbtM (521 aa).

This sequence belongs to the ATP-dependent AMP-binding enzyme family.

The catalysed reaction is a long-chain fatty acid + holo-[ACP] + ATP = a long-chain fatty acyl-[ACP] + AMP + diphosphate. It catalyses the reaction a medium-chain fatty acid + holo-[ACP] + ATP = a medium-chain fatty acyl-[ACP] + AMP + diphosphate. It functions in the pathway siderophore biosynthesis; mycobactin biosynthesis. Functionally, activates lipidic moieties required for mycobactin biosynthesis. Converts medium- to long-chain aliphatic fatty acids into acyl adenylate, which is further transferred on to the phosphopantetheine arm of the carrier protein MbtL. The chain is Medium/long-chain-fatty-acid--[acyl-carrier-protein] ligase MbtM (mbtM) from Mycobacterium tuberculosis (strain CDC 1551 / Oshkosh).